We begin with the raw amino-acid sequence, 215 residues long: MASEMEKADALLHTFSTASAFSSLGLGLFCFVADRVQQATFIQQHDWLRALSDSTTHCVIGMWSWAIVIGLRKRSDFCEVALAGFFASIIDLDHFFLAGSVSLKAATNLQRRPPLHCSTLIPVVALALKFLMQLLRLKDSWCFLPWMLFISWTSHHVRDGIRHGLWICPFGNTAPLPYWLYVVITASLPSVCSLIMCLTGTRQLMTTKHGIHIDV.

3 consecutive transmembrane segments (helical) span residues 77 to 97 (FCEV…HFFL), 114 to 134 (PLHC…LMQL), and 178 to 198 (YWLY…IMCL).

Its subcellular location is the membrane. The polypeptide is Transmembrane protein 267 (tmem267) (Xenopus laevis (African clawed frog)).